The following is a 413-amino-acid chain: MNSMEIRQAFAGLLTLSMFIMLGNMIKKDHFDYPAEEVEIQTTEVSQHDLATVSHISQKSKQNDKALKPCWNPPTLKEVEQSKGFIIFSLTNGPEYHIAQVADAVVVAKYLGATLVLPDIKNSKSGNSMNLGDIYDVENVLNKLNGLVKVTKTLPPHVSTRNTPIVRVPNKVSQDYIMKKLKPIYQAKGIIKIESYFPSKNTISRNNNSLESLLCQTMFGGTLELKKEIQEEAESIVQKLETWSQESNGPFVAVDLRIEGLKNECNGKDGKGRKQCYQGHEIGEFLKRIGFGQETVIYVTQTKWSPDLNSLRYMFPKTYTKENIMSSTKKEKFINSESIEFEKAIDFYICSESDVFVPSILGPFYENVAGMRIVSGKNEIIVPSEVVSPSASASEHMSPYVTKKNHLAYKCFC.

The Cytoplasmic segment spans residues 1 to 5 (MNSME). The helical; Signal-anchor for type II membrane protein transmembrane segment at 6–26 (IRQAFAGLLTLSMFIMLGNMI) threads the bilayer. Residues 27-413 (KKDHFDYPAE…KNHLAYKCFC (387 aa)) lie on the Lumenal side of the membrane. Asparagine 207 carries an N-linked (GlcNAc...) asparagine glycan. 255–257 (DLR) provides a ligand contact to substrate.

This sequence belongs to the glycosyltransferase GT106 family. In terms of tissue distribution, highly and specifically expressed in the endosperm.

The protein resides in the golgi apparatus membrane. Its pathway is glycan biosynthesis. In terms of biological role, glycosyltransferase involved in mannan biosynthesis. The polypeptide is Protein MANNAN SYNTHESIS-RELATED (Trigonella foenum-graecum (Fenugreek)).